The primary structure comprises 189 residues: Parkinson disease protein 7 homolog (189 aa).

S-palmitoyl cysteine attachment occurs at residues C46 and C53. Y67 bears the Phosphotyrosine mark. The S-palmitoyl cysteine moiety is linked to residue C106. Residue C106 is the Nucleophile of the active site. C106 carries the post-translational modification Cysteine sulfinic acid (-SO2H). C106 is modified (cysteine sulfinic acid (-SO2H); alternate). A lipid anchor (S-palmitoyl cysteine; alternate) is attached at C106. H126 is a catalytic residue. K130 participates in a covalent cross-link: Glycyl lysine isopeptide (Lys-Gly) (interchain with G-Cter in SUMO). K148 carries the post-translational modification N6-acetyllysine. K182 carries the N6-succinyllysine modification.

The protein belongs to the peptidase C56 family. In terms of assembly, homodimer. It depends on Deglycase activity does not require glutathione as a cofactor, however, glycated glutathione constitutes a PARK7 substrate. as a cofactor. Sumoylated on Lys-130 by pias2 or pias4; which is essential for cell-growth promoting activity and transforming activity. Post-translationally, undergoes cleavage of a C-terminal peptide and subsequent activation of protease activity in response to oxidative stress. In terms of tissue distribution, larval brain and gut from 96 hours post-fertilization (hpf). Ubiquitous in adult; most abundant in brain, eye, heart and muscle. Within brain, neuronal expression is widespread, particularly in the cerebellum, medullary reticular formation and diencephalon. Expressed in major forebrain and diencephalic dopaminergic cell groups.

The protein resides in the cell membrane. It localises to the cytoplasm. It is found in the nucleus. The protein localises to the membrane raft. Its subcellular location is the mitochondrion. The protein resides in the endoplasmic reticulum. It carries out the reaction N(omega)-(1-hydroxy-2-oxopropyl)-L-arginyl-[protein] + H2O = lactate + L-arginyl-[protein] + H(+). It catalyses the reaction N(6)-(1-hydroxy-2-oxopropyl)-L-lysyl-[protein] + H2O = lactate + L-lysyl-[protein] + H(+). The catalysed reaction is S-(1-hydroxy-2-oxopropyl)-L-cysteinyl-[protein] + H2O = lactate + L-cysteinyl-[protein] + H(+). The enzyme catalyses N(omega)-(1-hydroxy-2-oxoethyl)-L-arginyl-[protein] + H2O = L-arginyl-[protein] + glycolate + H(+). It carries out the reaction N(6)-(1-hydroxy-2-oxoethyl)-L-lysyl-[protein] + H2O = glycolate + L-lysyl-[protein] + H(+). It catalyses the reaction S-(1-hydroxy-2-oxoethyl)-L-cysteinyl-[protein] + H2O = glycolate + L-cysteinyl-[protein] + H(+). The catalysed reaction is N(2)-(1-hydroxy-2-oxopropyl)-dGTP + H2O = lactate + dGTP + H(+). The enzyme catalyses N(2)-(1-hydroxy-2-oxopropyl)-GTP + H2O = lactate + GTP + H(+). It carries out the reaction N(2)-(1-hydroxy-2-oxopropyl)-GDP + H2O = lactate + GDP + H(+). It catalyses the reaction N(2)-(1-hydroxy-2-oxopropyl)-GMP + H2O = lactate + GMP + H(+). The catalysed reaction is N(2)-(1-hydroxy-2-oxoethyl)-dGTP + H2O = dGTP + glycolate + H(+). The enzyme catalyses N(2)-(1-hydroxy-2-oxoethyl)-GTP + H2O = glycolate + GTP + H(+). It carries out the reaction N(2)-(1-hydroxy-2-oxoethyl)-GDP + H2O = glycolate + GDP + H(+). It catalyses the reaction N(2)-(1-hydroxy-2-oxoethyl)-GMP + H2O = glycolate + GMP + H(+). The catalysed reaction is an N(2)-(1-hydroxy-2-oxopropyl)-guanosine in RNA + H2O = a guanosine in RNA + lactate + H(+). The enzyme catalyses an N(2)-(1-hydroxy-2-oxopropyl)-2'-deoxyguanosine in DNA + H2O = a 2'-deoxyguanosine in DNA + lactate + H(+). It carries out the reaction an N(2)-(1-hydroxy-2-oxoethyl)-guanosine in RNA + H2O = a guanosine in RNA + glycolate + H(+). It catalyses the reaction an N(2)-(1-hydroxy-2-oxoethyl)-2'-deoxyguanosine in DNA + H2O = a 2'-deoxyguanosine in DNA + glycolate + H(+). Its function is as follows. Multifunctional protein with controversial molecular function which plays an important role in cell protection against oxidative stress and cell death acting as oxidative stress sensor and redox-sensitive chaperone and protease. It is involved in neuroprotective mechanisms like the stabilization of NFE2L2 and PINK1 proteins, male fertility as a positive regulator of androgen signaling pathway as well as cell growth and transformation through, for instance, the modulation of NF-kappa-B signaling pathway. Has been described as a protein and nucleotide deglycase that catalyzes the deglycation of the Maillard adducts formed between amino groups of proteins or nucleotides and reactive carbonyl groups of glyoxals. But this function is rebuted by other works. As a protein deglycase, repairs methylglyoxal- and glyoxal-glycated proteins, and releases repaired proteins and lactate or glycolate, respectively. Deglycates cysteine, arginine and lysine residues in proteins, and thus reactivates these proteins by reversing glycation by glyoxals. Acts on early glycation intermediates (hemithioacetals and aminocarbinols), preventing the formation of advanced glycation endproducts (AGE) that cause irreversible damage. Also functions as a nucleotide deglycase able to repair glycated guanine in the free nucleotide pool (GTP, GDP, GMP, dGTP) and in DNA and RNA. Is thus involved in a major nucleotide repair system named guanine glycation repair (GG repair), dedicated to reversing methylglyoxal and glyoxal damage via nucleotide sanitization and direct nucleic acid repair. Protects histones from adduction by methylglyoxal, controls the levels of methylglyoxal-derived argininine modifications on chromatin. Displays a very low glyoxalase activity that may reflect its deglycase activity. It is involved in neuroprotective mechanisms as well as cell growth and transformation. Its involvement in protein repair could also explain other unrelated functions. Eliminates hydrogen peroxide and protects cells against hydrogen peroxide-induced cell death. Required for correct mitochondrial morphology and function as well as for autophagy of dysfunctional mitochondria. Regulates astrocyte inflammatory responses, may modulate lipid rafts-dependent endocytosis in astrocytes and neuronal cells. Binds to a number of mRNAs containing multiple copies of GG or CC motifs and partially inhibits their translation but dissociates following oxidative stress. Metal-binding protein able to bind copper as well as toxic mercury ions, enhances the cell protection mechanism against induced metal toxicity. The protein is Parkinson disease protein 7 homolog of Danio rerio (Zebrafish).